The primary structure comprises 267 residues: MTKSVEGYLKEQELAAETDSEKDDDKISIRLTNFVGPNAHSFSFDPLVRYWNRKQNNLPIYIGRYTERYNGGDVSAIVFRSKVVSRRHAQIFYENNTWYIQDMGSSSGTFLNHVRLSPPSKTSKPYPISNNDILQLGADYRGGHEVNYRCVRARVELNNSWKIKLSPYNLNEFKRMQELVLCGSSESGPPECCICLMPVLPCQALFVAPCSHSYHYKCIRPTLNESHPYFSCFICRKYHDLEAPVEEGDESLNDLLRNATVKDDASE.

Residues 60 to 116 (IYIGRYTERYNGGDVSAIVFRSKVVSRRHAQIFYENNTWYIQDMGSSSGTFLNHVRL) enclose the FHA domain. Residues 192 to 236 (CCICLMPVLPCQALFVAPCSHSYHYKCIRPTLNESHPYFSCFICR) form an RING-type zinc finger.

This sequence belongs to the DMA1 family. Interacts with sid4.

Its subcellular location is the cytoplasm. The protein localises to the cytoskeleton. The protein resides in the microtubule organizing center. It localises to the spindle pole body. The enzyme catalyses S-ubiquitinyl-[E2 ubiquitin-conjugating enzyme]-L-cysteine + [acceptor protein]-L-lysine = [E2 ubiquitin-conjugating enzyme]-L-cysteine + N(6)-ubiquitinyl-[acceptor protein]-L-lysine.. Probable E3 ubiquitin-protein ligase which is a component of the spindle assembly checkpoint, required to prevent septum formation and premature exit from mitosis if spindle function is compromised. Inhibits the septation initiation netwok (SIN) during spindle checkpoint activation. The effect appears to be mediated through preventing the SIN activator, plo1 kinase, from localizing to the SPB. The sequence is that of Probable E3 ubiquitin-protein ligase dma1 (dma1) from Schizosaccharomyces pombe (strain 972 / ATCC 24843) (Fission yeast).